We begin with the raw amino-acid sequence, 273 residues long: MGQKVNPHGFRLGITTDHVSHWFADSTKPGQRYKDFVREDIKIRQLMSTGMERAGIAKVEIERTRDRVRVDIHTARPGIVIGRRGAEADRIRGELEKLTGKQVQLNILEVKNPEMEAQLVAQGIAEQLTSRVAFRRAMKKAMQSAQRAGAKGIRVACSGRLGGAEMSRSEFYREGRVPLHTLRANIDYGFYEAKTTFGRIGVKVWIYKGDVTAKELAQQAAAAPSRGRAGDRPGRPGGDRRRRNDRPAAEAAPAAVEAPAAEAAAPAAEGGQA.

The 69-residue stretch at 43–111 folds into the KH type-2 domain; that stretch reads IRQLMSTGME…QVQLNILEVK (69 aa). Residues 218-227 are compositionally biased toward low complexity; sequence QQAAAAPSRG. Residues 218–273 form a disordered region; it reads QQAAAAPSRGRAGDRPGRPGGDRRRRNDRPAAEAAPAAVEAPAAEAAAPAAEGGQA. Residues 228-239 show a composition bias toward basic and acidic residues; the sequence is RAGDRPGRPGGD. The segment covering 249 to 273 has biased composition (low complexity); the sequence is AEAAPAAVEAPAAEAAAPAAEGGQA.

It belongs to the universal ribosomal protein uS3 family. In terms of assembly, part of the 30S ribosomal subunit. Forms a tight complex with proteins S10 and S14.

Binds the lower part of the 30S subunit head. Binds mRNA in the 70S ribosome, positioning it for translation. The protein is Small ribosomal subunit protein uS3 of Paenarthrobacter aurescens (strain TC1).